We begin with the raw amino-acid sequence, 590 residues long: Probable lysine-specific demethylase 4B (590 aa).

The JmjN domain maps to 9 to 51; it reads IKVFRPTWEEFKDFPKYVAYMESQGAHKAGLAKVVPPPEWVPR. Tyr-130 contacts 2-oxoglutarate. One can recognise a JmjC domain in the interval 140 to 306; sequence DTDQDSWNIN…YGKRAVQCTC (167 aa). Residues His-186 and Glu-188 each contribute to the Fe cation site. Positions 196 and 204 each coordinate 2-oxoglutarate. The Zn(2+) site is built by Cys-232 and His-238. Lys-239 lines the 2-oxoglutarate pocket. His-274 lines the Fe cation pocket. Residues Cys-304 and Cys-306 each contribute to the Zn(2+) site. Disordered stretches follow at residues 372–395 and 417–590; these read PTKA…QNPN and ATDE…TASP. Residues 445-458 show a composition bias toward acidic residues; it reads EYIDDGTEDDDEEE. Over residues 480–494 the composition is skewed to basic residues; the sequence is SKRKTNSRNNRGRSP. Low complexity-rich tracts occupy residues 502–513 and 537–571; these read ISPASSTSSTSR and TTSP…TPPA.

This sequence belongs to the JHDM3 histone demethylase family. Requires Fe(2+) as cofactor.

It is found in the nucleus. The catalysed reaction is N(6),N(6),N(6)-trimethyl-L-lysyl(9)-[histone H3] + 2 2-oxoglutarate + 2 O2 = N(6)-methyl-L-lysyl(9)-[histone H3] + 2 formaldehyde + 2 succinate + 2 CO2. Probable histone demethylase that specifically demethylates 'Lys-9' and 'Lys-36' residues of histone H3, thereby playing a central role in histone code. Demethylation of Lys residue generates formaldehyde and succinate. This is Probable lysine-specific demethylase 4B (Kdm4B) from Drosophila melanogaster (Fruit fly).